A 619-amino-acid polypeptide reads, in one-letter code: Replication restart protein PriA (619 aa).

Residues 119-285 (LKELQKHSAS…KDKALVRLKG (167 aa)) form the Helicase ATP-binding domain. 132–139 (GDTGSGKT) is a binding site for ATP. A DEAH box motif is present at residues 228–231 (DEEH). Zn(2+)-binding residues include Cys-336, Cys-339, Cys-345, Cys-348, Cys-363, Cys-366, Cys-376, and Cys-379. Residues 371-532 (PIPKICSACQ…ELYPPFSRLC (162 aa)) form the Helicase C-terminal domain.

The protein belongs to the helicase family. PriA subfamily. In terms of assembly, component of the replication restart primosome. The cofactor is Zn(2+).

The enzyme catalyses Couples ATP hydrolysis with the unwinding of duplex DNA by translocating in the 3'-5' direction.. It carries out the reaction ATP + H2O = ADP + phosphate + H(+). Initiates the restart of stalled replication forks, which reloads the replicative helicase on sites other than the origin of replication. Recognizes and binds to abandoned replication forks and remodels them to uncover a helicase loading site. Promotes assembly of the primosome at these replication forks. Functionally, important for survival of the bacteria in host cells. The chain is Replication restart protein PriA from Helicobacter pylori (strain ATCC 700392 / 26695) (Campylobacter pylori).